A 338-amino-acid polypeptide reads, in one-letter code: Homoserine kinase (338 aa).

This sequence belongs to the GHMP kinase family. Homoserine kinase subfamily.

It catalyses the reaction L-homoserine + ATP = O-phospho-L-homoserine + ADP + H(+). It functions in the pathway amino-acid biosynthesis; L-threonine biosynthesis; L-threonine from L-aspartate: step 4/5. Commits homoserine to the threonine biosynthesis pathway by catalyzing its O-phosphorylation. This Schizosaccharomyces pombe (strain 972 / ATCC 24843) (Fission yeast) protein is Homoserine kinase.